Reading from the N-terminus, the 793-residue chain is Transcription factor opdR (793 aa).

Disordered regions lie at residues 1-29, 60-113, and 457-476; these read MAQD…DPCR, TASS…QSQN, and LDDE…QPSE. Residues 25-53 constitute a DNA-binding region (zn(2)-C6 fungal-type); sequence CDPCRRRKVRCDRKFPCGQCERARTALQC.

It localises to the nucleus. Functionally, transcription factor; part of the gene cluster that mediates the biosynthesis of oxopyrrolidines, polyketide-amino acid hybrid compounds with feature structures of tetramic acid. The polypeptide is Transcription factor opdR (Penicillium oxalicum (strain 114-2 / CGMCC 5302) (Penicillium decumbens)).